The primary structure comprises 178 residues: ATP-dependent protease subunit HslV (178 aa).

Residue T7 is part of the active site. The Na(+) site is built by G162, C165, and T168.

It belongs to the peptidase T1B family. HslV subfamily. In terms of assembly, a double ring-shaped homohexamer of HslV is capped on each side by a ring-shaped HslU homohexamer. The assembly of the HslU/HslV complex is dependent on binding of ATP.

It localises to the cytoplasm. It carries out the reaction ATP-dependent cleavage of peptide bonds with broad specificity.. With respect to regulation, allosterically activated by HslU binding. Protease subunit of a proteasome-like degradation complex believed to be a general protein degrading machinery. This chain is ATP-dependent protease subunit HslV, found in Burkholderia vietnamiensis (strain G4 / LMG 22486) (Burkholderia cepacia (strain R1808)).